The chain runs to 316 residues: Leucine-rich repeat-containing protein 73 (316 aa).

LRR repeat units follow at residues 57 to 78, 86 to 106, 114 to 137, 145 to 166, 174 to 187, 202 to 223, and 231 to 250; these read SLAQ…KQLA, SIQS…ALLN, ALVA…CGLL, GLKE…SRLA, QVRV…PLGD, TLEV…TLLD, and ALRS…QQQI. Positions 257-296 are disordered; it reads GEEEEEVAGGAGDTQEWERGREPAAHQRGSSSWMCPSDPS. Residues 272-281 show a composition bias toward basic and acidic residues; the sequence is EWERGREPAA. A compositionally biased stretch (low complexity) spans 286 to 296; it reads SSSWMCPSDPS.

This Homo sapiens (Human) protein is Leucine-rich repeat-containing protein 73 (LRRC73).